The following is a 103-amino-acid chain: MSDRHMSSIFPECDHLKQIYDKCFTEFFQKFITPNYRHQYAVNPCERLHDVYKRCVEERLATQRPFEIDLDEIRKEYLNTDDDKLKDRQNNQKTNSENKCSSS.

The CHCH domain occupies 10 to 63 (FPECDHLKQIYDKCFTEFFQKFITPNYRHQYAVNPCERLHDVYKRCVEERLATQ). 2 short sequence motifs (cx9C motif) span residues 13 to 23 (CDHLKQIYDKC) and 45 to 55 (CERLHDVYKRC). Cystine bridges form between Cys-13–Cys-55 and Cys-23–Cys-45. Residues 80–90 (TDDDKLKDRQN) show a composition bias toward basic and acidic residues. Positions 80 to 103 (TDDDKLKDRQNNQKTNSENKCSSS) are disordered. The span at 91–103 (NQKTNSENKCSSS) shows a compositional bias: polar residues.

This sequence belongs to the TRIAP1/MDM35 family.

This is an uncharacterized protein from Caenorhabditis elegans.